The chain runs to 119 residues: Early E3 13.3 kDa protein (119 aa).

The sequence is that of Early E3 13.3 kDa protein from Canine adenovirus serotype 1 (strain Utrecht) (CAdV-1).